Here is a 185-residue protein sequence, read N- to C-terminus: Ribosome-recycling factor (185 aa).

A disordered region spans residues 128–158 (VRNTRQDANNKVKKLEKDKEISEDESKKAQE).

It belongs to the RRF family.

Its subcellular location is the cytoplasm. In terms of biological role, responsible for the release of ribosomes from messenger RNA at the termination of protein biosynthesis. May increase the efficiency of translation by recycling ribosomes from one round of translation to another. The polypeptide is Ribosome-recycling factor (Helicobacter pylori (strain J99 / ATCC 700824) (Campylobacter pylori J99)).